We begin with the raw amino-acid sequence, 360 residues long: Protein MGF 360-1L (360 aa).

The protein belongs to the asfivirus MGF 360 family.

Its function is as follows. Plays a role in virus cell tropism, and may be required for efficient virus replication in macrophages. This chain is Protein MGF 360-1L, found in African swine fever virus (strain Badajoz 1971 Vero-adapted) (Ba71V).